Reading from the N-terminus, the 156-residue chain is Small ribosomal subunit protein uS7 (156 aa).

The protein belongs to the universal ribosomal protein uS7 family. In terms of assembly, part of the 30S ribosomal subunit. Contacts proteins S9 and S11.

One of the primary rRNA binding proteins, it binds directly to 16S rRNA where it nucleates assembly of the head domain of the 30S subunit. Is located at the subunit interface close to the decoding center, probably blocks exit of the E-site tRNA. The sequence is that of Small ribosomal subunit protein uS7 from Bifidobacterium longum (strain NCC 2705).